We begin with the raw amino-acid sequence, 352 residues long: Ion-translocating oxidoreductase complex subunit D (352 aa).

The next 4 helical transmembrane spans lie at 20-40, 42-62, 69-91, and 123-143; these read IMLL…WFFG, GTLF…AIVL, VASH…SIPP, and PAMI…TSWL. The residue at position 187 (Thr187) is an FMN phosphoryl threonine. 5 helical membrane-spanning segments follow: residues 215-235, 242-262, 267-287, 301-321, and 322-342; these read LAGV…VFLL, WHIP…GWLF, LASP…FFIL, LIFG…GGYP, and DGVA…DYYT.

This sequence belongs to the NqrB/RnfD family. The complex is composed of six subunits: RsxA, RsxB, RsxC, RsxD, RsxE and RsxG. FMN is required as a cofactor.

It is found in the cell inner membrane. In terms of biological role, part of a membrane-bound complex that couples electron transfer with translocation of ions across the membrane. Required to maintain the reduced state of SoxR. This chain is Ion-translocating oxidoreductase complex subunit D, found in Salmonella paratyphi B (strain ATCC BAA-1250 / SPB7).